Here is a 122-residue protein sequence, read N- to C-terminus: Large ribosomal subunit protein eL31 (122 aa).

It belongs to the eukaryotic ribosomal protein eL31 family.

This Caenorhabditis elegans protein is Large ribosomal subunit protein eL31.